Reading from the N-terminus, the 312-residue chain is Formate dehydrogenase iron-sulfur subunit (312 aa).

4Fe-4S ferredoxin-type domains lie at 35-65 (IAKL…SDIN), 97-129 (LEWL…QYAN), 130-159 (GIVD…MNPE), and 164-195 (YKCT…FGSK). [4Fe-4S] cluster-binding residues include cysteine 44, cysteine 47, cysteine 50, cysteine 54, cysteine 106, cysteine 109, cysteine 114, cysteine 118, cysteine 139, cysteine 142, cysteine 145, cysteine 149, cysteine 166, cysteine 169, cysteine 181, and cysteine 185.

As to quaternary structure, formate dehydrogenase is a membrane-bound complex, formed by subunits alpha, beta and gamma. The cofactor is [4Fe-4S] cluster.

It localises to the cell membrane. Its function is as follows. Allows to use formate as major electron donor during aerobic respiration. The beta chain is an electron transfer unit containing 4 cysteine clusters involved in the formation of iron-sulfur centers. Electrons are transferred from the gamma chain to the molybdenum cofactor of the alpha subunit. The polypeptide is Formate dehydrogenase iron-sulfur subunit (fdxH) (Haemophilus influenzae (strain ATCC 51907 / DSM 11121 / KW20 / Rd)).